The sequence spans 264 residues: Thymidylate synthase (264 aa).

Residue Arg-21 coordinates dUMP. His-51 is a binding site for (6R)-5,10-methylene-5,6,7,8-tetrahydrofolate. 126 to 127 lines the dUMP pocket; that stretch reads RR. The Nucleophile role is filled by Cys-146. DUMP-binding positions include 166–169, Asn-177, and 207–209; these read RSAD and HLY. A (6R)-5,10-methylene-5,6,7,8-tetrahydrofolate-binding site is contributed by Asp-169. Position 263 (Ala-263) interacts with (6R)-5,10-methylene-5,6,7,8-tetrahydrofolate.

Belongs to the thymidylate synthase family. Bacterial-type ThyA subfamily. In terms of assembly, homodimer.

Its subcellular location is the cytoplasm. It carries out the reaction dUMP + (6R)-5,10-methylene-5,6,7,8-tetrahydrofolate = 7,8-dihydrofolate + dTMP. Its pathway is pyrimidine metabolism; dTTP biosynthesis. Functionally, catalyzes the reductive methylation of 2'-deoxyuridine-5'-monophosphate (dUMP) to 2'-deoxythymidine-5'-monophosphate (dTMP) while utilizing 5,10-methylenetetrahydrofolate (mTHF) as the methyl donor and reductant in the reaction, yielding dihydrofolate (DHF) as a by-product. This enzymatic reaction provides an intracellular de novo source of dTMP, an essential precursor for DNA biosynthesis. The protein is Thymidylate synthase of Pseudomonas aeruginosa (strain LESB58).